The sequence spans 397 residues: Probable inactive purple acid phosphatase 28 (397 aa).

The N-terminal stretch at 1-30 is a signal peptide; it reads MNCSIGNWKHTVLYLTLIVSLLYFIESLIS. 2 N-linked (GlcNAc...) asparagine glycosylation sites follow: N91 and N209. Residues H266 and H314 each coordinate Zn(2+). 314–316 lines the substrate pocket; the sequence is HDH. H316 provides a ligand contact to Fe cation.

The protein belongs to the metallophosphoesterase superfamily. Purple acid phosphatase family. Homodimer. Requires Fe cation as cofactor. The cofactor is Zn(2+). Expressed in roots, stems, leaves, flowers and siliques.

Its subcellular location is the secreted. In Arabidopsis thaliana (Mouse-ear cress), this protein is Probable inactive purple acid phosphatase 28 (PAP28).